The primary structure comprises 207 residues: Proteasome subunit beta 2 (207 aa).

A propeptide spans 1 to 10 (MLQLTEKFKG) (removed in mature form; by autocatalysis). Thr11 acts as the Nucleophile in catalysis.

This sequence belongs to the peptidase T1B family. As to quaternary structure, the 20S proteasome core is composed of 14 alpha and 14 beta subunits that assemble into four stacked heptameric rings, resulting in a barrel-shaped structure. The two inner rings, each composed of seven catalytic beta subunits, are sandwiched by two outer rings, each composed of seven alpha subunits. The catalytic chamber with the active sites is on the inside of the barrel. Has a gated structure, the ends of the cylinder being occluded by the N-termini of the alpha-subunits. Is capped at one or both ends by the proteasome regulatory ATPase, PAN.

The protein resides in the cytoplasm. The catalysed reaction is Cleavage of peptide bonds with very broad specificity.. Its activity is regulated as follows. The formation of the proteasomal ATPase PAN-20S proteasome complex, via the docking of the C-termini of PAN into the intersubunit pockets in the alpha-rings, triggers opening of the gate for substrate entry. Interconversion between the open-gate and close-gate conformations leads to a dynamic regulation of the 20S proteasome proteolysis activity. In terms of biological role, component of the proteasome core, a large protease complex with broad specificity involved in protein degradation. In Pyrococcus abyssi (strain GE5 / Orsay), this protein is Proteasome subunit beta 2.